A 61-amino-acid chain; its full sequence is MDIEPEVPVVEKQMLAGNRGKQKTRRSVAKDAIRKPASDSTNGGNWVNVADKIEVHIHFNF.

The disordered stretch occupies residues 15–45 (LAGNRGKQKTRRSVAKDAIRKPASDSTNGGN). The segment at 17-35 (GNRGKQKTRRSVAKDAIRK) is RNA-binding. Residues 28–37 (VAKDAIRKPA) are compositionally biased toward basic and acidic residues.

It belongs to the carmovirus double gene block protein 1 family. Homodimer.

Its function is as follows. Cell-to-cell movement. Displays RNA-binding activity. This is Double gene block protein 1 from Carnation mottle virus (isolate China/Shanghai) (CarMV).